We begin with the raw amino-acid sequence, 287 residues long: Bifunctional protein FolD (287 aa).

NADP(+) contacts are provided by residues 171 to 173 (GHS) and isoleucine 237.

This sequence belongs to the tetrahydrofolate dehydrogenase/cyclohydrolase family. As to quaternary structure, homodimer.

The enzyme catalyses (6R)-5,10-methylene-5,6,7,8-tetrahydrofolate + NADP(+) = (6R)-5,10-methenyltetrahydrofolate + NADPH. The catalysed reaction is (6R)-5,10-methenyltetrahydrofolate + H2O = (6R)-10-formyltetrahydrofolate + H(+). Its pathway is one-carbon metabolism; tetrahydrofolate interconversion. Its function is as follows. Catalyzes the oxidation of 5,10-methylenetetrahydrofolate to 5,10-methenyltetrahydrofolate and then the hydrolysis of 5,10-methenyltetrahydrofolate to 10-formyltetrahydrofolate. This Methanosarcina barkeri (strain Fusaro / DSM 804) protein is Bifunctional protein FolD.